Consider the following 100-residue polypeptide: MQLTPREIEKLMVYTLADVALKRKSRGLKLNYPEAVAIITAAALEGAREGKTLEEVMDDSRHVLTKEDVMDGVADLIPHVQVEAIFTDGSRLVTVHDPIQ.

The protein belongs to the urease gamma subunit family. Heterotrimer of UreA (gamma), UreB (beta) and UreC (alpha) subunits. Three heterotrimers associate to form the active enzyme.

The protein resides in the cytoplasm. The catalysed reaction is urea + 2 H2O + H(+) = hydrogencarbonate + 2 NH4(+). The protein operates within nitrogen metabolism; urea degradation; CO(2) and NH(3) from urea (urease route): step 1/1. The protein is Urease subunit gamma of Photorhabdus laumondii subsp. laumondii (strain DSM 15139 / CIP 105565 / TT01) (Photorhabdus luminescens subsp. laumondii).